The primary structure comprises 42 residues: Crotamine Ile-19 (42 aa).

3 cysteine pairs are disulfide-bonded: C4–C36, C11–C30, and C18–C37.

It belongs to the crotamine-myotoxin family. Monomer. In terms of tissue distribution, expressed by the venom gland.

It is found in the secreted. Cationic peptide that possesses multiple functions. It acts as a cell-penetrating peptide (CPP), and as a potent voltage-gated potassium channel (Kv) inhibitor, it induces severe muscle necrosis by a non-enzymatic mechanism and exhibits antimicrobial activities. It also elicits a short-lasting hyperextension of the hind limb. It does not cause observable tissue damage (whereas the whole venom causes severe myonecrosis accompanied by edema and hemorrhage). The protein is Crotamine Ile-19 of Crotalus durissus ruruima (South American rattlesnake).